The chain runs to 206 residues: Small ribosomal subunit protein uS4 (206 aa).

An S4 RNA-binding domain is found at 96–156 (GRLDNVVYRM…EKAKKQSRVK (61 aa)).

It belongs to the universal ribosomal protein uS4 family. As to quaternary structure, part of the 30S ribosomal subunit. Contacts protein S5. The interaction surface between S4 and S5 is involved in control of translational fidelity.

One of the primary rRNA binding proteins, it binds directly to 16S rRNA where it nucleates assembly of the body of the 30S subunit. Its function is as follows. With S5 and S12 plays an important role in translational accuracy. In Salmonella agona (strain SL483), this protein is Small ribosomal subunit protein uS4.